The primary structure comprises 1024 residues: Carbamoyl phosphate synthase large chain (1024 aa).

Residues 1 to 396 (MDIKKILVIG…AWQKAVRMID (396 aa)) form a carboxyphosphate synthetic domain region. 12 residues coordinate ATP: Arg125, Arg165, Gly171, Gly172, Lys204, Leu206, Glu211, Gly237, Val238, His239, Gln280, and Glu294. In terms of domain architecture, ATP-grasp 1 spans 129–323 (QKAMREAGIP…LAYIAAKLAL (195 aa)). Residues Gln280, Glu294, and Asn296 each coordinate Mg(2+). Residues Gln280, Glu294, and Asn296 each contribute to the Mn(2+) site. Positions 397–536 (IGEPGLVGGP…LTYGGQYDDK (140 aa)) are oligomerization domain. A carbamoyl phosphate synthetic domain region spans residues 536–917 (KTPGVDYLVV…LKSWLSATPN (382 aa)). The ATP-grasp 2 domain maps to 660–849 (SKLLDRLGIK…YMSLVADVLT (190 aa)). Positions 696, 735, 742, 766, 767, 768, 769, 809, and 820 each coordinate ATP. Mg(2+) contacts are provided by Gln809, Glu820, and Asn822. Residues Gln809, Glu820, and Asn822 each contribute to the Mn(2+) site. The 108-residue stretch at 917–1024 (NKIPSKTALI…KNGKLEVAPW (108 aa)) folds into the MGS-like domain. The allosteric domain stretch occupies residues 918–1024 (KIPSKTALIY…KNGKLEVAPW (107 aa)).

This sequence belongs to the CarB family. In terms of assembly, composed of two chains; the small (or glutamine) chain promotes the hydrolysis of glutamine to ammonia, which is used by the large (or ammonia) chain to synthesize carbamoyl phosphate. Tetramer of heterodimers (alpha,beta)4. Mg(2+) is required as a cofactor. The cofactor is Mn(2+).

It carries out the reaction hydrogencarbonate + L-glutamine + 2 ATP + H2O = carbamoyl phosphate + L-glutamate + 2 ADP + phosphate + 2 H(+). It catalyses the reaction hydrogencarbonate + NH4(+) + 2 ATP = carbamoyl phosphate + 2 ADP + phosphate + 2 H(+). It functions in the pathway amino-acid biosynthesis; L-arginine biosynthesis; carbamoyl phosphate from bicarbonate: step 1/1. Its pathway is pyrimidine metabolism; UMP biosynthesis via de novo pathway; (S)-dihydroorotate from bicarbonate: step 1/3. In terms of biological role, large subunit of the glutamine-dependent carbamoyl phosphate synthetase (CPSase). CPSase catalyzes the formation of carbamoyl phosphate from the ammonia moiety of glutamine, carbonate, and phosphate donated by ATP, constituting the first step of 2 biosynthetic pathways, one leading to arginine and/or urea and the other to pyrimidine nucleotides. The large subunit (synthetase) binds the substrates ammonia (free or transferred from glutamine from the small subunit), hydrogencarbonate and ATP and carries out an ATP-coupled ligase reaction, activating hydrogencarbonate by forming carboxy phosphate which reacts with ammonia to form carbamoyl phosphate. The polypeptide is Carbamoyl phosphate synthase large chain (Pyrobaculum aerophilum (strain ATCC 51768 / DSM 7523 / JCM 9630 / CIP 104966 / NBRC 100827 / IM2)).